Reading from the N-terminus, the 763-residue chain is Phosphoglycerol transferase I (763 aa).

4 helical membrane passes run 1-21, 26-46, 77-97, and 108-128; these read MSEL…AWKA, WWFA…ITLY, ILPG…LGWI, and VGYS…SPAF.

The protein belongs to the OpgB family.

It is found in the cell inner membrane. The enzyme catalyses a phosphatidylglycerol + a membrane-derived-oligosaccharide D-glucose = a 1,2-diacyl-sn-glycerol + a membrane-derived-oligosaccharide 6-(glycerophospho)-D-glucose.. Its pathway is glycan metabolism; osmoregulated periplasmic glucan (OPG) biosynthesis. Functionally, transfers a phosphoglycerol residue from phosphatidylglycerol to the membrane-bound nascent glucan backbones. In Salmonella paratyphi B (strain ATCC BAA-1250 / SPB7), this protein is Phosphoglycerol transferase I.